The primary structure comprises 340 residues: Phenylalanine--tRNA ligase alpha subunit (340 aa).

Mg(2+) is bound at residue Glu254.

It belongs to the class-II aminoacyl-tRNA synthetase family. Phe-tRNA synthetase alpha subunit type 1 subfamily. Tetramer of two alpha and two beta subunits. Requires Mg(2+) as cofactor.

Its subcellular location is the cytoplasm. The enzyme catalyses tRNA(Phe) + L-phenylalanine + ATP = L-phenylalanyl-tRNA(Phe) + AMP + diphosphate + H(+). The sequence is that of Phenylalanine--tRNA ligase alpha subunit from Caldicellulosiruptor saccharolyticus (strain ATCC 43494 / DSM 8903 / Tp8T 6331).